The primary structure comprises 103 residues: Histone H4 (103 aa).

Residues 1–14 show a composition bias toward gly residues; that stretch reads MSGRGKGGKGLGKG. The disordered stretch occupies residues 1-20; it reads MSGRGKGGKGLGKGGAKRHR. Ser-2 carries the N-acetylserine modification. N6-acetyl-N6-methyllysine; alternate occurs at positions 6 and 13. Lys-17 bears the N6-acetyllysine mark. A DNA-binding region spans residues 17–21; sequence KRHRK. N6-methyllysine is present on Lys-21.

This sequence belongs to the histone H4 family. As to quaternary structure, the nucleosome is a histone octamer containing two molecules each of H2A, H2B, H3 and H4 assembled in one H3-H4 heterotetramer and two H2A-H2B heterodimers. The octamer wraps approximately 147 bp of DNA.

Its subcellular location is the nucleus. The protein localises to the chromosome. Core component of nucleosome. Nucleosomes wrap and compact DNA into chromatin, limiting DNA accessibility to the cellular machineries which require DNA as a template. Histones thereby play a central role in transcription regulation, DNA repair, DNA replication and chromosomal stability. DNA accessibility is regulated via a complex set of post-translational modifications of histones, also called histone code, and nucleosome remodeling. This Ascaris suum (Pig roundworm) protein is Histone H4.